The chain runs to 416 residues: Enterobactin exporter EntS (416 aa).

At 1 to 21 (MNKQSWLLNLSLLKTHPAFRA) the chain is on the cytoplasmic side. The helical transmembrane segment at 22 to 42 (VFLARFISIVSLGLLGVAVPV) threads the bilayer. Residues 43 to 55 (QIQMMTHSTWQVG) lie on the Periplasmic side of the membrane. The helical transmembrane segment at 56 to 76 (LSVTLTGGAMFVGLMVGGVLA) threads the bilayer. The Cytoplasmic portion of the chain corresponds to 77 to 83 (DRYERKK). Residues 84–104 (VILLARGTCGIGFIGLCLNAL) form a helical membrane-spanning segment. At 105-109 (LPEPS) the chain is on the periplasmic side. A helical transmembrane segment spans residues 110-130 (LLAIYLLGLWDGFFASLGVTA). Residues 131–156 (LLAATPALVGRENLMQAGAITMLTVR) lie on the Cytoplasmic side of the membrane. Residues 157–177 (LGSVISPMIGGLLLATGGVAW) traverse the membrane as a helical segment. A topological domain (periplasmic) is located at residue Asn-178. Residues 179–199 (YGLAAAGTFITLLPLLSLPAL) form a helical membrane-spanning segment. The Cytoplasmic segment spans residues 200–218 (PPPPQPREHPLKSLLAGFR). A helical transmembrane segment spans residues 219-239 (FLLASPLVGGIALLGGLLTMA). Topologically, residues 240–256 (SAVRVLYPALADNWQMS) are periplasmic. Residues 257-277 (AAQIGFLYAAIPLGAAIGALT) traverse the membrane as a helical segment. At 278 to 287 (SGKLAHSARP) the chain is on the cytoplasmic side. Residues 288 to 307 (GLLMLLSTLGSFLAIGLFGL) traverse the membrane as a helical segment. Residues 308–313 (MPMWIL) lie on the Periplasmic side of the membrane. The helical transmembrane segment at 314-336 (GVICLALFGWLSAVSSLLQYTML) threads the bilayer. Topologically, residues 337–356 (QTQTPEAMLGRINGLWTAQN) are cytoplasmic. Residues 357-377 (VTGDAIGAALLGGLGAMMTPV) traverse the membrane as a helical segment. A topological domain (periplasmic) is located at residue Ala-378. A helical membrane pass occupies residues 379–399 (SASASGFGLLIIGVLLLLVLV). Residues 400–416 (ELRRFRQTPPQVTASDS) lie on the Cytoplasmic side of the membrane.

This sequence belongs to the major facilitator superfamily. EntS (TC 2.A.1.38) family.

It localises to the cell inner membrane. Functionally, component of an export pathway for enterobactin. The sequence is that of Enterobactin exporter EntS from Escherichia coli O81 (strain ED1a).